A 674-amino-acid polypeptide reads, in one-letter code: Probable copper-transporting P-type ATPase B (674 aa).

A disordered region spans residues 1–22 (MNHSNQMHHDNHASHDHHSGHA). Residues 7–19 (MHHDNHASHDHHS) are compositionally biased toward basic and acidic residues. 6 helical membrane passes run 32 to 52 (FFVS…MGVN), 57 to 77 (FTFP…FFYG), 95 to 115 (GMMT…LYAF), 127 to 147 (TMDF…GHWI), 284 to 304 (GYLF…WMLI), and 315 to 335 (LVTV…PLVT). D367 serves as the catalytic 4-aspartylphosphate intermediate. Positions 565 and 569 each coordinate Mg(2+). 2 helical membrane-spanning segments follow: residues 623–645 (LWWG…AFIG) and 649–671 (SPAI…AFTL).

Belongs to the cation transport ATPase (P-type) (TC 3.A.3) family. Type IB subfamily.

The protein localises to the cell membrane. The catalysed reaction is Cu(+)(in) + ATP + H2O = Cu(+)(out) + ADP + phosphate + H(+). Involved in copper transport. In Staphylococcus aureus (strain USA300 / TCH1516), this protein is Probable copper-transporting P-type ATPase B (copB).